Reading from the N-terminus, the 369-residue chain is Translocating chain-associated membrane protein 1-like 1 (369 aa).

Topologically, residues 1–29 (MGLRKKSTKNPPVLSQEFILQNHADIVSC) are cytoplasmic. The chain crosses the membrane as a helical span at residues 30–50 (VGMFFLLGLVFEGTAEASIVF). Topologically, residues 51–81 (LTLQHSVAVPAAEEQATGSKSLYYYGVKDLA) are lumenal. The helical transmembrane segment at 82–102 (TVFFYMLVAIIIHATIQEYVL) threads the bilayer. At 103 to 121 (DKINKRMQFTKAKQNKFNE) the chain is on the cytoplasmic side. One can recognise a TLC domain in the interval 117–326 (NKFNESGQFS…TLWLQRWVED (210 aa)). Residues 122–142 (SGQFSVFYFFSCIWGTFILIS) traverse the membrane as a helical segment. The Lumenal segment spans residues 143 to 164 (ENCLSDPTLIWKARPHSMMTFQ). Residues 165 to 185 (MKFFYISQLAYWFHAFPELYF) form a helical membrane-spanning segment. Residues 186–196 (QKTKKQDIPRQ) lie on the Cytoplasmic side of the membrane. Residues 197–215 (LVYIGLHLFHITGAYLLYL) form a helical membrane-spanning segment. The Lumenal segment spans residues 216-219 (NHLG). Residues 220–242 (LLLLVLHYFVELLSHMCGLFYFS) traverse the membrane as a helical segment. Residues 243-249 (DEKYQKG) lie on the Cytoplasmic side of the membrane. The helical transmembrane segment at 250 to 270 (ISLWAIVFILGRLVTLIVSVL) threads the bilayer. Residues 271 to 297 (TVGFHLAGSQNRNPDALTGNVNVLAAK) lie on the Lumenal side of the membrane. Residues 298 to 318 (IAVLSSSCTIQAYVTWNLITL) form a helical membrane-spanning segment. Residues 319 to 369 (WLQRWVEDSNIQASCMKKKRSRSSKKRTENGVGVETSNRVDCPPKRKEKSS) are Cytoplasmic-facing. The disordered stretch occupies residues 335–369 (KKKRSRSSKKRTENGVGVETSNRVDCPPKRKEKSS). Over residues 360 to 369 (CPPKRKEKSS) the composition is skewed to basic and acidic residues.

It belongs to the TRAM family.

Its subcellular location is the endoplasmic reticulum membrane. In terms of biological role, stimulatory or required for the translocation of secretory proteins across the ER membrane. The sequence is that of Translocating chain-associated membrane protein 1-like 1 (TRAM1L1) from Homo sapiens (Human).